The following is a 419-amino-acid chain: Tyrosine--tRNA ligase (419 aa).

Tyrosine 34 lines the L-tyrosine pocket. The 'HIGH' region motif lies at proline 39–histidine 48. The L-tyrosine site is built by tyrosine 169 and glutamine 173. The short motif at lysine 229–serine 233 is the 'KMSKS' region element. Lysine 232 contacts ATP. Positions leucine 352–lysine 419 constitute an S4 RNA-binding domain.

It belongs to the class-I aminoacyl-tRNA synthetase family. TyrS type 1 subfamily. In terms of assembly, homodimer.

It is found in the cytoplasm. The enzyme catalyses tRNA(Tyr) + L-tyrosine + ATP = L-tyrosyl-tRNA(Tyr) + AMP + diphosphate + H(+). In terms of biological role, catalyzes the attachment of tyrosine to tRNA(Tyr) in a two-step reaction: tyrosine is first activated by ATP to form Tyr-AMP and then transferred to the acceptor end of tRNA(Tyr). The polypeptide is Tyrosine--tRNA ligase (Streptococcus agalactiae serotype V (strain ATCC BAA-611 / 2603 V/R)).